Here is a 216-residue protein sequence, read N- to C-terminus: Sperm microtubule inner protein 8 (216 aa).

In terms of assembly, microtubule inner protein component of sperm flagellar doublet microtubules. Expressed in sperm.

The protein resides in the cytoplasm. Its subcellular location is the cytoskeleton. It localises to the flagellum axoneme. In terms of biological role, microtubule inner protein (MIP) part of the dynein-decorated doublet microtubules (DMTs) in flagellum axoneme. May serve to reinforce and thus stabilize the microtubule structure in the sperm flagella. This is Sperm microtubule inner protein 8 (SPMIP8) from Bos taurus (Bovine).